The chain runs to 313 residues: HPr kinase/phosphorylase (313 aa).

Residues His140 and Lys161 contribute to the active site. 155–162 contacts ATP; sequence GNSGAGKS. Ser162 serves as a coordination point for Mg(2+). Asp179 (proton acceptor; for phosphorylation activity. Proton donor; for dephosphorylation activity) is an active-site residue. The segment at 203-212 is important for the catalytic mechanism of both phosphorylation and dephosphorylation; that stretch reads IEVRGLGILN. A Mg(2+)-binding site is contributed by Glu204. Arg246 is an active-site residue. The interval 267–272 is important for the catalytic mechanism of dephosphorylation; that stretch reads PVAAGR.

The protein belongs to the HPrK/P family. As to quaternary structure, homohexamer. Mg(2+) serves as cofactor.

The enzyme catalyses [HPr protein]-L-serine + ATP = [HPr protein]-O-phospho-L-serine + ADP + H(+). It carries out the reaction [HPr protein]-O-phospho-L-serine + phosphate + H(+) = [HPr protein]-L-serine + diphosphate. Catalyzes the ATP- as well as the pyrophosphate-dependent phosphorylation of a specific serine residue in HPr, a phosphocarrier protein of the phosphoenolpyruvate-dependent sugar phosphotransferase system (PTS). HprK/P also catalyzes the pyrophosphate-producing, inorganic phosphate-dependent dephosphorylation (phosphorolysis) of seryl-phosphorylated HPr (P-Ser-HPr). The polypeptide is HPr kinase/phosphorylase (Azoarcus sp. (strain BH72)).